The following is a 109-amino-acid chain: MTTPSRLPDPYGQGQSANLADILERVLDKGVVIAGDIKINLLDIELLTIKLRLVVASVDKAKEMGIDWWESDPALSSRARHDELTRENAALRERLRELDPGRVPREEAP.

It belongs to the gas vesicle GvpA family. Interacts with GvpA.

It is found in the gas vesicle. Functionally, a minor component of the gas vesicle, might be involved in nucleating gas vesicle formation. Gas vesicles (GV) are hollow, gas filled proteinaceous nanostructures. It is not clear what function GVs perform in soil bacteria. The polypeptide is Probable gas vesicle protein J1 (gvpJ1) (Streptomyces coelicolor (strain ATCC BAA-471 / A3(2) / M145)).